We begin with the raw amino-acid sequence, 414 residues long: 2-acylphloroglucinol 4-prenyltransferase (414 aa).

A chloroplast-targeting transit peptide spans 1 to 86; it reads MELSSVSSFS…LKPLSIFSCK (86 aa). 8 helical membrane passes run 153-173, 201-221, 229-249, 256-276, 281-301, 336-356, 359-379, and 394-414; these read FSWP…GSCF, ISVE…FILI, LLTS…VPPF, ITAF…VYYA, LGLA…ITFM, LLGT…AIIW, AFKS…LFFQ, and KSFY…YLFI.

It belongs to the UbiA prenyltransferase family. As to quaternary structure, component an active demethylxanthohumol (DMX) biosynthetic metabolon in glandular trichomes (lupulin glands) that encompasses a chalcone synthase (CHS) and a membrane-bound prenyltransferase. Interacts with PT2, forming a functional metabolon. Interacts with CHIL2; this interaction promotes catalytic activity. Mg(2+) serves as cofactor. In terms of tissue distribution, expressed in trichomes.

Its subcellular location is the plastid. It is found in the chloroplast membrane. It carries out the reaction 2',4,4',6'-tetrahydroxychalcone + dimethylallyl diphosphate = desmethylxanthohumol + diphosphate. It catalyses the reaction a 2-acylphloroglucinol + dimethylallyl diphosphate = a 2-acyl-4-prenylphloroglucinol + diphosphate. The protein operates within secondary metabolite biosynthesis. Its activity is regulated as follows. Stimulated by CHIL2 but inhibited by CHIL1. Involved in the biosynthesis of prenylated phenolics natural products which contribute to the bitter taste of beer and display broad biological activities. Catalyzes the first prenylation step in the beta-bitter acid pathway. Uses dimethylallyl diphosphate (DMAPP) as the prenyl donor. This is 2-acylphloroglucinol 4-prenyltransferase from Humulus lupulus (European hop).